The sequence spans 206 residues: Eukaryotic translation initiation factor isoform 4E-2 (206 aa).

Cysteine 103 and cysteine 142 are oxidised to a cystine.

It belongs to the eukaryotic initiation factor 4E family. As to quaternary structure, EIF4F is a multi-subunit complex, the composition of which varies with external and internal environmental conditions. It is composed of at least EIF4A, EIF4E and EIF4G. EIF4E is also known to interact with other partners. In higher plants two isoforms of EIF4F have been identified, named isoform EIF4F and isoform EIF(iso)4F. Isoform EIF4F has subunits p220 and p26, whereas isoform EIF(iso)4F has subunits p82 and p28. According to the redox status, the Cys-103-Cys-142 disulfide bridge may have a role in regulating protein function by affecting its ability to bind capped mRNA.

Its function is as follows. Recognizes and binds the 7-methylguanosine-containing mRNA cap during an early step in the initiation of protein synthesis and facilitates ribosome binding by inducing the unwinding of the mRNAs secondary structures. The polypeptide is Eukaryotic translation initiation factor isoform 4E-2 (Oryza sativa subsp. japonica (Rice)).